Here is a 687-residue protein sequence, read N- to C-terminus: POZ (BTB) and AT hook-containing zinc finger 1 (687 aa).

Positions 41-130 constitute a BTB domain; the sequence is CDVLLRVGDE…AYTSRIVVRL (90 aa). Residues 250–260 show a composition bias toward polar residues; sequence PFPNVASSAPP. The disordered stretch occupies residues 250-279; the sequence is PFPNVASSAPPLTSKRGRGRPRKANLLDSM. The C2H2-type 1 zinc finger occupies 292-314; the sequence is LPCGLCGKVFTDANRLRQHEAQH. A disordered region spans residues 332 to 351; sequence GENGLPISEDPDGPRKRSRT. C2H2-type zinc fingers lie at residues 355–377, 383–405, 413–436, 442–464, and 495–517; these read VACE…KLSH, YSCP…VRSH, YICQ…KQVH, HKCQ…LACH, and NFCS…VKTH. The disordered stretch occupies residues 564–587; that stretch reads SYGDLSDASDLKTPEKQSANGSFS. A C2H2-type 7 zinc finger spans residues 605–628; sequence YPCPECGSFFRSKSYLNKHIQKVH.

As to quaternary structure, homodimer. Interacts with RNF4. Interacts (via C-terminus) with TP53; this interaction inhibits TP53 ability to activate transcription. Widely expressed at high levels during embryogenesis, especially in the central nervous system, especially to the actively proliferating neuroblasts in the periventricular neocortical neuroepithelium, in the telencephalic cortical plate and in the hippocampus. Also expressed in a stage-specific manner in the mouse germinal epithelium. While strongly expressed during brain development,m its expression turns down in adult brain.

It is found in the nucleus. In terms of biological role, transcriptional regulator that plays a role in many biological processes such as embryogenesis, senescence, T-cell development or neurogenesis. Interacts with the TP53 protein to control genes that are important in proliferation and in the DNA-damage response. Mechanistically, the interaction inhibits the DNA binding and transcriptional activity of TP53/p53. Part of the transcriptional network modulating regulatory T-cell development and controls the generation of the regulatory T-cell pool under homeostatic conditions. The chain is POZ (BTB) and AT hook-containing zinc finger 1 from Mus musculus (Mouse).